The following is a 464-amino-acid chain: UDP-N-acetylmuramate--L-alanine ligase (464 aa).

Residue Gly-112–Thr-118 participates in ATP binding.

It belongs to the MurCDEF family.

The protein localises to the cytoplasm. It carries out the reaction UDP-N-acetyl-alpha-D-muramate + L-alanine + ATP = UDP-N-acetyl-alpha-D-muramoyl-L-alanine + ADP + phosphate + H(+). It functions in the pathway cell wall biogenesis; peptidoglycan biosynthesis. Its function is as follows. Cell wall formation. This chain is UDP-N-acetylmuramate--L-alanine ligase, found in Acidithiobacillus ferrooxidans (strain ATCC 23270 / DSM 14882 / CIP 104768 / NCIMB 8455) (Ferrobacillus ferrooxidans (strain ATCC 23270)).